Consider the following 698-residue polypeptide: MSNINKTTQDVIVGDKTLSLETGWVAKQADGSVIARMGDTMVLATAVSDKVQKPGISDFVPLTVNYKERTYAAGKIPGGFFKRESRASKKETLASRIIDRSLRPLFPSGYTCETNVTAMVLSADGVYDTEVLAVMASSTALIISSIPFTTPVAAVRIGRLNGNFIVNPTLEEQKSCDMDLIISGSLEGMLMVEGGAKEVSEEDVIKALETAKPAIDILCKAQLELKEKAGKEKFSFQAETVPQDVVDLGNNKYRAEVANILNAFYDKQTRDVKIAELKAAFAEEIKEAHGDNASTFAGITMENLSYEESRKLVLEKGVRVDGRKTDEIRQLNSITGLLPRAHGSALFTRGQTQGLVVTTLGTSGDAQLVESLEESYDETFMLHYNFPGFSTGECKPDRAPGRREIGHGELARRALLPLIPDADKFPYTIRVVSDIMESNGSSSMASVCGGSLSLFDAGVPMKAACSGIAMGLIKEGDKYAVLSDIMGLEDHLGDMDFKLTGSRNGITAFQMDVKLAGGISIEILKEAVAQATKGRMHIMDHMDSVLPEPRKDVSKFAPVIYTMRIPQDKIGALIGPGGKNIKRITETTDTKIDINDDGVVQIAAVNGDKLAMAKAEIELLTAEVELNKIYKGKVVSIQPFGAFVELIPGKDGLLHISEIDKKRINKVEDVLKMGDIVEVKVVEIDNNGKVRLSRKVLL.

D490 and D496 together coordinate Mg(2+). The region spanning 558-617 (PVIYTMRIPQDKIGALIGPGGKNIKRITETTDTKIDINDDGVVQIAAVNGDKLAMAKAEI) is the KH domain. The region spanning 627 to 695 (NKIYKGKVVS…NNGKVRLSRK (69 aa)) is the S1 motif domain.

Belongs to the polyribonucleotide nucleotidyltransferase family. It depends on Mg(2+) as a cofactor.

The protein resides in the cytoplasm. The catalysed reaction is RNA(n+1) + phosphate = RNA(n) + a ribonucleoside 5'-diphosphate. In terms of biological role, involved in mRNA degradation. Catalyzes the phosphorolysis of single-stranded polyribonucleotides processively in the 3'- to 5'-direction. The polypeptide is Polyribonucleotide nucleotidyltransferase (Elusimicrobium minutum (strain Pei191)).